The primary structure comprises 1299 residues: DNA-directed RNA polymerase subunit beta' (1299 aa).

Zn(2+)-binding residues include Cys60, Cys62, Cys75, and Cys78. Positions 385–405 (GRRGRPVTGPGNRPLKSLSDM) are disordered. Asp535, Asp537, and Asp539 together coordinate Mg(2+). The Zn(2+) site is built by Cys886, Cys962, Cys969, and Cys972.

It belongs to the RNA polymerase beta' chain family. The RNAP catalytic core consists of 2 alpha, 1 beta, 1 beta' and 1 omega subunit. When a sigma factor is associated with the core the holoenzyme is formed, which can initiate transcription. Mg(2+) serves as cofactor. The cofactor is Zn(2+).

It carries out the reaction RNA(n) + a ribonucleoside 5'-triphosphate = RNA(n+1) + diphosphate. In terms of biological role, DNA-dependent RNA polymerase catalyzes the transcription of DNA into RNA using the four ribonucleoside triphosphates as substrates. This is DNA-directed RNA polymerase subunit beta' from Streptomyces avermitilis (strain ATCC 31267 / DSM 46492 / JCM 5070 / NBRC 14893 / NCIMB 12804 / NRRL 8165 / MA-4680).